Consider the following 253-residue polypeptide: 1-(5-phosphoribosyl)-5-[(5-phosphoribosylamino)methylideneamino] imidazole-4-carboxamide isomerase (253 aa).

Asp8 functions as the Proton acceptor in the catalytic mechanism. Asp131 (proton donor) is an active-site residue.

Belongs to the HisA/HisF family.

Its subcellular location is the cytoplasm. It carries out the reaction 1-(5-phospho-beta-D-ribosyl)-5-[(5-phospho-beta-D-ribosylamino)methylideneamino]imidazole-4-carboxamide = 5-[(5-phospho-1-deoxy-D-ribulos-1-ylimino)methylamino]-1-(5-phospho-beta-D-ribosyl)imidazole-4-carboxamide. It participates in amino-acid biosynthesis; L-histidine biosynthesis; L-histidine from 5-phospho-alpha-D-ribose 1-diphosphate: step 4/9. The chain is 1-(5-phosphoribosyl)-5-[(5-phosphoribosylamino)methylideneamino] imidazole-4-carboxamide isomerase from Polynucleobacter necessarius subsp. necessarius (strain STIR1).